The following is a 478-amino-acid chain: ATP synthase subunit beta (478 aa).

An ATP-binding site is contributed by 164 to 171; the sequence is GGAGVGKT.

Belongs to the ATPase alpha/beta chains family. In terms of assembly, F-type ATPases have 2 components, CF(1) - the catalytic core - and CF(0) - the membrane proton channel. CF(1) has five subunits: alpha(3), beta(3), gamma(1), delta(1), epsilon(1). CF(0) has three main subunits: a(1), b(2) and c(9-12). The alpha and beta chains form an alternating ring which encloses part of the gamma chain. CF(1) is attached to CF(0) by a central stalk formed by the gamma and epsilon chains, while a peripheral stalk is formed by the delta and b chains.

It localises to the cell membrane. The catalysed reaction is ATP + H2O + 4 H(+)(in) = ADP + phosphate + 5 H(+)(out). Functionally, produces ATP from ADP in the presence of a proton gradient across the membrane. The catalytic sites are hosted primarily by the beta subunits. In Streptomyces avermitilis (strain ATCC 31267 / DSM 46492 / JCM 5070 / NBRC 14893 / NCIMB 12804 / NRRL 8165 / MA-4680), this protein is ATP synthase subunit beta.